The primary structure comprises 117 residues: Nuclear transition protein 2 (117 aa).

The tract at residues 1-117 (MDTKMQSLPT…KRRSSGRRYK (117 aa)) is disordered. Residues 7-26 (SLPTTHPHPHSSSRPQSHTS) show a composition bias toward low complexity. Residues H12, H14, H16, H24, C32, C34, C38, and C41 each contribute to the Zn(2+) site. Over residues 44-53 (AGHAGSSSSP) the composition is skewed to low complexity. Composition is skewed to basic residues over residues 60 to 77 (KHPK…RPSH) and 93 to 117 (SKRK…RRYK). Residues 90-98 (GKVSKRKAV) carry the Nuclear localization signal motif. S112 carries the post-translational modification Phosphoserine.

Belongs to the nuclear transition protein 2 family.

Its subcellular location is the nucleus. It localises to the chromosome. In terms of biological role, plays a key role in the replacement of histones to protamine in the elongating spermatids of mammals. In condensing spermatids, loaded onto the nucleosomes, where it promotes the recruitment and processing of protamines, which are responsible for histone eviction. The histone H2AB1-H2BC1/TH2B dimer is required for loading of TNP2 onto chromatin. In Mus musculus (Mouse), this protein is Nuclear transition protein 2.